We begin with the raw amino-acid sequence, 309 residues long: tRNA pseudouridine synthase B (309 aa).

The Nucleophile role is filled by Asp40.

This sequence belongs to the pseudouridine synthase TruB family. Type 1 subfamily.

The enzyme catalyses uridine(55) in tRNA = pseudouridine(55) in tRNA. Functionally, responsible for synthesis of pseudouridine from uracil-55 in the psi GC loop of transfer RNAs. The sequence is that of tRNA pseudouridine synthase B from Mycobacterium avium (strain 104).